The primary structure comprises 146 residues: 3-dehydroquinate dehydratase (146 aa).

Tyrosine 24 serves as the catalytic Proton acceptor. 3 residues coordinate substrate: asparagine 75, histidine 81, and aspartate 88. The Proton donor role is filled by histidine 101. Substrate-binding positions include 102-103 (LS) and arginine 112.

The protein belongs to the type-II 3-dehydroquinase family. As to quaternary structure, homododecamer.

The catalysed reaction is 3-dehydroquinate = 3-dehydroshikimate + H2O. The protein operates within metabolic intermediate biosynthesis; chorismate biosynthesis; chorismate from D-erythrose 4-phosphate and phosphoenolpyruvate: step 3/7. Functionally, catalyzes a trans-dehydration via an enolate intermediate. In Caulobacter vibrioides (strain ATCC 19089 / CIP 103742 / CB 15) (Caulobacter crescentus), this protein is 3-dehydroquinate dehydratase.